The chain runs to 164 residues: Diphosphoinositol polyphosphate phosphohydrolase 3-beta (164 aa).

Substrate-binding positions include Arg-9, 17–19, and 38–40; these read KKR and SSR. The region spanning 17 to 144 is the Nudix hydrolase domain; sequence KKRAACLCFR…VHAEYLEKLK (128 aa). Mg(2+)-binding residues include Gly-49 and Glu-65. Positions 50–71 match the Nudix box motif; the sequence is GGMEPEEEPGGAAVREVYEEAG. Glu-68 acts as the Proton acceptor in catalysis. Position 69 (Glu-69) interacts with Mg(2+). Substrate-binding positions include 89–91, Arg-115, and Lys-133; that span reads RKH. The tract at residues 144–164 is disordered; that stretch reads KLGGSPTNGNSMAPSSPDSDP. The segment covering 148–164 has biased composition (polar residues); sequence SPTNGNSMAPSSPDSDP.

It belongs to the Nudix hydrolase family. DIPP subfamily. Mg(2+) is required as a cofactor. Requires Mn(2+) as cofactor. Mainly expressed in testis and, at lower level in brain. According to PubMed:12121577, it is also expressed in pancreas and weakly expressed in thymus, prostate, ovary, lung, small intestine and heart.

Its subcellular location is the cytoplasm. The enzyme catalyses diphospho-myo-inositol polyphosphate + H2O = myo-inositol polyphosphate + phosphate.. It carries out the reaction P(1),P(6)-bis(5'-adenosyl) hexaphosphate + H2O = adenosine 5'-pentaphosphate + AMP + 2 H(+). The catalysed reaction is P(1),P(5)-bis(5'-adenosyl) pentaphosphate + H2O = adenosine 5'-tetraphosphate + AMP + 2 H(+). Functionally, cleaves a beta-phosphate from the diphosphate groups in PP-InsP5 (diphosphoinositol pentakisphosphate), suggesting that it may play a role in signal transduction. Also able to catalyze the hydrolysis of dinucleoside oligophosphates, with Ap6A and Ap5A being the preferred substrates. The major reaction products are ADP and p4a from Ap6A and ADP and ATP from Ap5A. Also able to hydrolyze 5-phosphoribose 1-diphosphate. This Homo sapiens (Human) protein is Diphosphoinositol polyphosphate phosphohydrolase 3-beta.